A 427-amino-acid chain; its full sequence is Inward rectifier potassium channel 2 (427 aa).

Topologically, residues 1-81 are cytoplasmic; that stretch reads MGSVRTNRYS…IFTTCVDIRW (81 aa). Cysteine 76 carries the post-translational modification S-nitrosocysteine. The chain crosses the membrane as a helical span at residues 82-106; it reads RWMLVIFCLAFVLSWLFFGCVFWLI. The Extracellular segment spans residues 107–128; that stretch reads ALLHGDLDASRESKACVSEVNS. Residues 129-140 constitute an intramembrane region (helical; Pore-forming); that stretch reads FTAAFLFSIETQ. Residues 141–147 constitute an intramembrane region (pore-forming); that stretch reads TTIGYGF. The Selectivity filter signature appears at 142–147; the sequence is TIGYGF. The Extracellular segment spans residues 148 to 156; sequence RCVTDECPV. Residues 157 to 178 traverse the membrane as a helical segment; the sequence is AVFMVVFQSIVGCIIDAFIIGA. Over 179-427 the chain is Cytoplasmic; that stretch reads VMAKMAKPKK…PRPLRRESEI (249 aa). The segment at 181-208 is polyphosphoinositide (PIP2)-binding; the sequence is AKMAKPKKRNETLVFSHNAVIAMRDGKL. Residues 384–427 form a disordered region; sequence SKEEDDSENGVPESTSTDTPPDIDLHNQASVPLEPRPLRRESEI. A PDZ-binding motif is present at residues 425 to 427; sequence SEI.

It belongs to the inward rectifier-type potassium channel (TC 1.A.2.1) family. KCNJ2 subfamily. Homotetramer. Homomultimeric and heteromultimeric association with KCNJ4/Kir2.3. Can form heteromeric channels with Kir2.6/KCNJ18. Associates, via its PDZ-recognition domain, with a complex containing LIN7A, LIN7B, LIN7C, DLG1, CASK and APBA1. S-nitrosylation increases the open probability and inward rectifying currents. In terms of tissue distribution, highly expressed in the ventricle and skeletal muscle, moderately in cerebrum and cerebellum. Only low levels are detected in kidney or lung.

The protein resides in the cell membrane. Its subcellular location is the sarcolemma. It is found in the T-tubule. It carries out the reaction K(+)(in) = K(+)(out). Its activity is regulated as follows. Activated by phosphatidylinositol 4,5 biphosphate (PtdIns(4,5)P2). Inward rectifier potassium channels are characterized by a greater tendency to allow potassium to flow into the cell rather than out of it. Their voltage dependence is regulated by the concentration of extracellular potassium; as external potassium is raised, the voltage range of the channel opening shifts to more positive voltages. The inward rectification is mainly due to the blockage of outward current by internal magnesium. Can be blocked by extracellular barium and cesium. Probably participates in establishing action potential waveform and excitability of neuronal and muscle tissues. The sequence is that of Inward rectifier potassium channel 2 (KCNJ2) from Oryctolagus cuniculus (Rabbit).